The sequence spans 143 residues: Actinoxanthin (143 aa).

The signal sequence occupies residues 1–33 (MSLRHMSRRASRFGVVAVASIGLAAAAQSVAFA). 2 disulfide bridges follow: cysteine 69–cysteine 78 and cysteine 119–cysteine 124.

Belongs to the neocarzinostatin family.

Its function is as follows. Binds non-covalently to a chromophore which is the cytotoxic and mutagenic component of the antibiotic. The chromophore binds to DNA as a weak intercalator and causes single- and double-strand breaks. The chain is Actinoxanthin (axnA) from Streptomyces globisporus.